Consider the following 252-residue polypeptide: Isoprenyl transferase (252 aa).

Residue Asp-32 is part of the active site. Asp-32 contacts Mg(2+). Residues 33–36, Trp-37, Arg-45, His-49, and 77–79 contribute to the substrate site; these read GNGR and STE. Catalysis depends on Asn-80, which acts as the Proton acceptor. Substrate contacts are provided by residues Trp-81, Arg-83, Arg-200, and 206 to 208; that span reads RLS. Glu-219 is a binding site for Mg(2+).

The protein belongs to the UPP synthase family. Homodimer. Requires Mg(2+) as cofactor.

In terms of biological role, catalyzes the condensation of isopentenyl diphosphate (IPP) with allylic pyrophosphates generating different type of terpenoids. This Oceanobacillus iheyensis (strain DSM 14371 / CIP 107618 / JCM 11309 / KCTC 3954 / HTE831) protein is Isoprenyl transferase.